Here is a 115-residue protein sequence, read N- to C-terminus: Cell division protein FtsL (115 aa).

At 1-25 (MNTATRVIVAQNVRTRNRTFQITKQ) the chain is on the cytoplasmic side. Residues 26–46 (GVVIVALVIALLCSAFGVVYF) form a helical membrane-spanning segment. The Periplasmic portion of the chain corresponds to 47–115 (KDLNRRLFIQ…ILVNADAMIE (69 aa)).

It belongs to the FtsL family. In terms of assembly, part of a complex composed of FtsB, FtsL and FtsQ.

It localises to the cell inner membrane. Functionally, essential cell division protein. May link together the upstream cell division proteins, which are predominantly cytoplasmic, with the downstream cell division proteins, which are predominantly periplasmic. In Coxiella burnetii (strain RSA 493 / Nine Mile phase I), this protein is Cell division protein FtsL.